A 21-amino-acid polypeptide reads, in one-letter code: Peptide PGLa-BM2 (21 aa).

Ala-21 carries the alanine amide modification.

In terms of tissue distribution, expressed by the skin glands.

The protein localises to the secreted. In terms of biological role, antimicrobial peptide. The sequence is that of Peptide PGLa-BM2 from Xenopus boumbaensis (Mawa clawed frog).